The sequence spans 324 residues: MNKIVLYLLVYGAVQCAAYDVLKAPNYFEDFLHKFNKSYSSESEKLRRFQIFRHNLEEIINKNHNDSTAQYEINKFADLSKDETISKYTGLSLPLQTQNFCEVVVLDRPPDKGPLEFDWRRLNKVTSVKNQGMCGACWAFATLGSLESQFAIKHNQFINLSEQQLIDCDFVDAGCDGGLLHTAFEAVMNMGGIQAESDYPYEANNGDCRANAAKFVVKVKKCYRYITVFEEKLKDLLRSVGPIPVAIDASDIVNYKRGIMKYCANHGLNHAVLLVGYAVENGVPFWILKNTWGADWGEQGYFRVQQNINACGIQNELPSSAEIY.

The N-terminal stretch at 1-16 is a signal peptide; sequence MNKIVLYLLVYGAVQC. Positions 17-113 are cleaved as a propeptide — activation peptide; that stretch reads AAYDVLKAPN…VVLDRPPDKG (97 aa). Cystine bridges form between Cys134/Cys175, Cys168/Cys208, and Cys263/Cys311. Cys137 is an active-site residue. N-linked (GlcNAc...) asparagine; by host glycosylation occurs at Asn159. Active-site residues include His270 and Asn290.

The protein belongs to the peptidase C1 family. Post-translationally, synthesized as an inactive proenzyme and activated by proteolytic removal of the inhibitory propeptide.

The catalysed reaction is Endopeptidase of broad specificity, hydrolyzing substrates of both cathepsin L and cathepsin B.. Cysteine protease that plays an essential role in host liquefaction to facilitate horizontal transmission of the virus. May participate in the degradation of foreign protein expressed by the baculovirus system. This chain is Viral cathepsin (Vcath), found in Choristoneura fumiferana nuclear polyhedrosis virus (CfMNPV).